The sequence spans 100 residues: UPF0045 protein MJ1052 (100 aa).

Belongs to the UPF0045 family.

The sequence is that of UPF0045 protein MJ1052 from Methanocaldococcus jannaschii (strain ATCC 43067 / DSM 2661 / JAL-1 / JCM 10045 / NBRC 100440) (Methanococcus jannaschii).